Consider the following 477-residue polypeptide: Ribulose bisphosphate carboxylase large chain (477 aa).

Residues methionine 1 to serine 2 constitute a propeptide that is removed on maturation. Proline 3 is subject to N-acetylproline. Residue lysine 14 is modified to N6,N6,N6-trimethyllysine. 2 residues coordinate substrate: asparagine 123 and threonine 173. Lysine 175 functions as the Proton acceptor in the catalytic mechanism. Residue lysine 177 coordinates substrate. Residues lysine 201, aspartate 203, and glutamate 204 each contribute to the Mg(2+) site. Lysine 201 carries the N6-carboxylysine modification. Catalysis depends on histidine 294, which acts as the Proton acceptor. Substrate-binding residues include arginine 295, histidine 327, and serine 379.

The protein belongs to the RuBisCO large chain family. Type I subfamily. Heterohexadecamer of 8 large chains and 8 small chains; disulfide-linked. The disulfide link is formed within the large subunit homodimers. Requires Mg(2+) as cofactor. In terms of processing, the disulfide bond which can form in the large chain dimeric partners within the hexadecamer appears to be associated with oxidative stress and protein turnover.

The protein resides in the plastid. It localises to the chloroplast. It catalyses the reaction 2 (2R)-3-phosphoglycerate + 2 H(+) = D-ribulose 1,5-bisphosphate + CO2 + H2O. The catalysed reaction is D-ribulose 1,5-bisphosphate + O2 = 2-phosphoglycolate + (2R)-3-phosphoglycerate + 2 H(+). Functionally, ruBisCO catalyzes two reactions: the carboxylation of D-ribulose 1,5-bisphosphate, the primary event in carbon dioxide fixation, as well as the oxidative fragmentation of the pentose substrate in the photorespiration process. Both reactions occur simultaneously and in competition at the same active site. This Carthamus tinctorius (Safflower) protein is Ribulose bisphosphate carboxylase large chain.